A 628-amino-acid polypeptide reads, in one-letter code: Monoterpene synthase like 1, chloroplastic (628 aa).

Asp379, Asp383, and Asp531 together coordinate Mg(2+). The short motif at Asp379 to Asp383 is the DDXXD motif element.

Belongs to the terpene synthase family. Tpsd subfamily. Requires Mg(2+) as cofactor. The cofactor is Mn(2+).

Its subcellular location is the plastid. The protein resides in the chloroplast. It functions in the pathway terpene metabolism; oleoresin biosynthesis. The protein operates within secondary metabolite biosynthesis; terpenoid biosynthesis. Monoterpene synthase (TPS) involved in the biosynthesis of monoterpene natural products included in conifer oleoresin secretions and volatile emissions; these compounds contribute to biotic and abiotic stress defense against herbivores and pathogens. In Pinus banksiana (Jack pine), this protein is Monoterpene synthase like 1, chloroplastic.